The following is a 76-amino-acid chain: Large ribosomal subunit protein bL31 (76 aa).

This sequence belongs to the bacterial ribosomal protein bL31 family. Type A subfamily. Part of the 50S ribosomal subunit.

Functionally, binds the 23S rRNA. The chain is Large ribosomal subunit protein bL31 from Rhizorhabdus wittichii (strain DSM 6014 / CCUG 31198 / JCM 15750 / NBRC 105917 / EY 4224 / RW1) (Sphingomonas wittichii).